The primary structure comprises 193 residues: Signal peptidase I T (193 aa).

The Cytoplasmic segment spans residues 1 to 25 (MTEEKNTNTEKTAKKKTNTYLEWGK). A helical transmembrane segment spans residues 26 to 42 (AIVIAVLLALLIRHFLF). Topologically, residues 43–193 (EPYLVEGSSM…FPFNEMRQTK (151 aa)) are extracellular. Catalysis depends on residues serine 51 and lysine 93.

This sequence belongs to the peptidase S26 family.

The protein resides in the cell membrane. It carries out the reaction Cleavage of hydrophobic, N-terminal signal or leader sequences from secreted and periplasmic proteins.. This is Signal peptidase I T (sipT) from Bacillus subtilis (strain 168).